A 128-amino-acid polypeptide reads, in one-letter code: MALPKDMRLKGHRTFNYIHKNSITYHGKLMTFKVARSNPGILLTHKLKNTSNKFRVAIAISKKVSKKAVERNKLRRILQEWLLTNIQKINNHKPYWLLVNLKFGDFCNDKSKLLEEFQNLMFKSRLIK.

The protein belongs to the RnpA family. In terms of assembly, consists of a catalytic RNA component (M1 or rnpB) and a protein subunit.

It carries out the reaction Endonucleolytic cleavage of RNA, removing 5'-extranucleotides from tRNA precursor.. RNaseP catalyzes the removal of the 5'-leader sequence from pre-tRNA to produce the mature 5'-terminus. It can also cleave other RNA substrates such as 4.5S RNA. The protein component plays an auxiliary but essential role in vivo by binding to the 5'-leader sequence and broadening the substrate specificity of the ribozyme. The polypeptide is Ribonuclease P protein component (Prochlorococcus marinus (strain MIT 9301)).